The chain runs to 540 residues: Sensory neuron membrane protein 1 (540 aa).

Residues 1 to 105 (MRTDDPVIGN…WIFRPDLSKP (105 aa)) lie on the Cytoplasmic side of the membrane. A helical membrane pass occupies residues 106–126 (LTGDEMITIPHPLILGALLMV). At 127–436 (QRDREAMMPL…YTLFLGLRFN (310 aa)) the chain is on the extracellular side. Residues Asn193 and Asn206 are each glycosylated (N-linked (GlcNAc...) asparagine). Intrachain disulfides connect Cys245-Cys310, Cys274-Cys330, and Cys312-Cys319. Residue Asn418 is glycosylated (N-linked (GlcNAc...) asparagine). A helical transmembrane segment spans residues 437 to 457 (TAVKWLTIIIGTIGTIVGGFM). At 458-540 (HYKRTTKMVN…VTVTEMQERY (83 aa)) the chain is on the cytoplasmic side.

Belongs to the CD36 family.

Its subcellular location is the cell membrane. Functionally, plays an olfactory role that is not restricted to pheromone sensitivity. This chain is Sensory neuron membrane protein 1, found in Aedes aegypti (Yellowfever mosquito).